A 120-amino-acid chain; its full sequence is Small ribosomal subunit protein bS6 (120 aa).

Residues 97–112 (SNEPSPILKNQSTENT) are compositionally biased toward polar residues. A disordered region spans residues 97-120 (SNEPSPILKNQSTENTPVIDVTAN).

Belongs to the bacterial ribosomal protein bS6 family.

In terms of biological role, binds together with bS18 to 16S ribosomal RNA. This Rickettsia bellii (strain OSU 85-389) protein is Small ribosomal subunit protein bS6.